The following is a 162-amino-acid chain: NADH-ubiquinone oxidoreductase subunit 8 (162 aa).

4Fe-4S ferredoxin-type domains are found at residues 54–83 (RRYQTGEERCIACKLCEAICPAQAITIESE) and 93–122 (TRYDIDMTKCIYCGFCQEACPVDAIVEGPN). [4Fe-4S] cluster contacts are provided by C63, C66, C69, C73, C102, C105, C108, and C112.

This sequence belongs to the complex I 23 kDa subunit family. [4Fe-4S] cluster is required as a cofactor.

It localises to the mitochondrion. The catalysed reaction is a ubiquinone + NADH + 5 H(+)(in) = a ubiquinol + NAD(+) + 4 H(+)(out). Its function is as follows. Core subunit of the mitochondrial membrane respiratory chain NADH dehydrogenase (Complex I) that is believed to belong to the minimal assembly required for catalysis. Complex I functions in the transfer of electrons from NADH to the respiratory chain. The immediate electron acceptor for the enzyme is believed to be ubiquinone. May donate electrons to ubiquinone. The sequence is that of NADH-ubiquinone oxidoreductase subunit 8 (NAD8) from Reclinomonas americana.